The chain runs to 674 residues: Growth arrest-specific protein 6 (674 aa).

The N-terminal stretch at 1 to 27 (MPPPPGPAAALGTALLLLLLASESSHT) is a signal peptide. Residues 50–91 (FEEAKQGHLERECVEEVCSKEEAREVFENDPETEYFYPRYQE) form the Gla domain. C62 and C67 are joined by a disulfide. A Phosphoserine modification is found at S68. One can recognise an EGF-like 1; calcium-binding domain in the interval 113 to 151 (LPDQCTPNPCDKKGTHICQDLMGNFFCVCTDGWGGRLCD). Intrachain disulfides connect C117-C130, C122-C139, C141-C150, C157-C168, C164-C177, C179-C192, C198-C209, C204-C218, C220-C233, C239-C248, C244-C257, C259-C274, C280-C566, and C441-C467. The EGF-like 2; calcium-binding domain occupies 153–193 (DVNECVQKNGGCSQVCHNKPGSFQCACHSGFSLASDGQTCQ). The region spanning 194-234 (DIDECTDSDTCGDARCKNLPGSYSCLCDEGYTYSSKEKTCQ) is the EGF-like 3; calcium-binding domain. An EGF-like 4; calcium-binding domain is found at 235 to 275 (DVDECQQDRCEQTCVNSPGSYTCHCDGRGGLKLSPDMDTCE). Laminin G-like domains are found at residues 295–467 (GRMF…KMQC) and 474–666 (GSFF…SHSC). D326 and E328 together coordinate Ca(2+). The N-linked (GlcNAc...) asparagine glycan is linked to N417. Residue R437 participates in Ca(2+) binding. The N-linked (GlcNAc...) asparagine glycan is linked to N488. T609 carries the post-translational modification Phosphothreonine. Phosphoserine is present on S614. Residues T617 and T633 each carry the phosphothreonine modification. Phosphotyrosine is present on Y636. C639 and C666 are oxidised to a cystine. D652 is a Ca(2+) binding site.

Heterodimer and heterotetramer with AXL. Gamma-carboxyglutamate residues are formed by vitamin K dependent carboxylation. These residues are essential for the binding of calcium.

It localises to the secreted. In terms of biological role, ligand for tyrosine-protein kinase receptors AXL, TYRO3 and MER whose signaling is implicated in cell growth and survival, cell adhesion and cell migration. GAS6/AXL signaling plays a role in various processes such as endothelial cell survival during acidification by preventing apoptosis, optimal cytokine signaling during human natural killer cell development, hepatic regeneration, gonadotropin-releasing hormone neuron survival and migration, platelet activation, or regulation of thrombotic responses. In Mus musculus (Mouse), this protein is Growth arrest-specific protein 6 (Gas6).